Consider the following 251-residue polypeptide: Enolase-phosphatase E1 (251 aa).

Mg(2+) is bound by residues Asp-13 and Glu-15. Residues 137-138 and Lys-183 contribute to the substrate site; that span reads SS. Asp-210 lines the Mg(2+) pocket.

It belongs to the HAD-like hydrolase superfamily. MasA/MtnC family. Monomer. The cofactor is Mg(2+).

The protein localises to the cytoplasm. The protein resides in the nucleus. It carries out the reaction 5-methylsulfanyl-2,3-dioxopentyl phosphate + H2O = 1,2-dihydroxy-5-(methylsulfanyl)pent-1-en-3-one + phosphate. Its pathway is amino-acid biosynthesis; L-methionine biosynthesis via salvage pathway; L-methionine from S-methyl-5-thio-alpha-D-ribose 1-phosphate: step 3/6. The protein operates within amino-acid biosynthesis; L-methionine biosynthesis via salvage pathway; L-methionine from S-methyl-5-thio-alpha-D-ribose 1-phosphate: step 4/6. Bifunctional enzyme that catalyzes the enolization of 2,3-diketo-5-methylthiopentyl-1-phosphate (DK-MTP-1-P) into the intermediate 2-hydroxy-3-keto-5-methylthiopentenyl-1-phosphate (HK-MTPenyl-1-P), which is then dephosphorylated to form the acireductone 1,2-dihydroxy-3-keto-5-methylthiopentene (DHK-MTPene). The chain is Enolase-phosphatase E1 from Candida glabrata (strain ATCC 2001 / BCRC 20586 / JCM 3761 / NBRC 0622 / NRRL Y-65 / CBS 138) (Yeast).